A 216-amino-acid chain; its full sequence is DDB1- and CUL4-associated factor 16 (216 aa).

Residues 1 to 42 are disordered; it reads MGPRNPSPDHLSESESEEEENISYLNESSGEEWDSSEEEDSM. Acidic residues predominate over residues 29–41; that stretch reads SGEEWDSSEEEDS. Lys-61 carries the post-translational modification N6-acetyllysine.

Interacts with DDB1 and CUL4A.

It localises to the nucleus. Its pathway is protein modification; protein ubiquitination. Functions as a substrate recognition component for CUL4-DDB1 E3 ubiquitin-protein ligase complex, which mediates ubiquitination and proteasome-dependent degradation of nuclear proteins. The protein is DDB1- and CUL4-associated factor 16 of Homo sapiens (Human).